A 249-amino-acid chain; its full sequence is 5'-nucleotidase SurE (249 aa).

D8, D9, S39, and N91 together coordinate a divalent metal cation.

This sequence belongs to the SurE nucleotidase family. It depends on a divalent metal cation as a cofactor.

It is found in the cytoplasm. The catalysed reaction is a ribonucleoside 5'-phosphate + H2O = a ribonucleoside + phosphate. Its function is as follows. Nucleotidase that shows phosphatase activity on nucleoside 5'-monophosphates. The chain is 5'-nucleotidase SurE from Haemophilus influenzae (strain PittGG).